An 842-amino-acid polypeptide reads, in one-letter code: MAMLGNVLHLSPMVLATTTTTKPSLLNQSKCTKATPSSLKNCKTIDELKMFHRSLTKQGLDNDVSTITKLVARSCELGTRESLSFAKEVFENSESYGTCFMYNSLIRGYASSGLCNEAILLFLRMMNSGISPDKYTFPFGLSACAKSRAKGNGIQIHGLIVKMGYAKDLFVQNSLVHFYAECGELDSARKVFDEMSERNVVSWTSMICGYARRDFAKDAVDLFFRMVRDEEVTPNSVTMVCVISACAKLEDLETGEKVYAFIRNSGIEVNDLMVSALVDMYMKCNAIDVAKRLFDEYGASNLDLCNAMASNYVRQGLTREALGVFNLMMDSGVRPDRISMLSAISSCSQLRNILWGKSCHGYVLRNGFESWDNICNALIDMYMKCHRQDTAFRIFDRMSNKTVVTWNSIVAGYVENGEVDAAWETFETMPEKNIVSWNTIISGLVQGSLFEEAIEVFCSMQSQEGVNADGVTMMSIASACGHLGALDLAKWIYYYIEKNGIQLDVRLGTTLVDMFSRCGDPESAMSIFNSLTNRDVSAWTAAIGAMAMAGNAERAIELFDDMIEQGLKPDGVAFVGALTACSHGGLVQQGKEIFYSMLKLHGVSPEDVHYGCMVDLLGRAGLLEEAVQLIEDMPMEPNDVIWNSLLAACRVQGNVEMAAYAAEKIQVLAPERTGSYVLLSNVYASAGRWNDMAKVRLSMKEKGLRKPPGTSSIQIRGKTHEFTSGDESHPEMPNIEAMLDEVSQRASHLGHVPDLSNVLMDVDEKEKIFMLSRHSEKLAMAYGLISSNKGTTIRIVKNLRVCSDCHSFAKFASKVYNREIILRDNNRFHYIRQGKCSCGDFW.

PPR repeat units lie at residues 98-132 (TCFM…GISP), 133-167 (DKYT…GYAK), 168-202 (DLFV…NVVS), 203-234 (WTSM…EVTP), 235-269 (NSVT…GIEV), 270-300 (NDLM…YGAS), 301-335 (NLDL…GVRP), 336-370 (DRIS…GFES), 371-401 (WDNI…MSNK), 402-436 (TVVT…NIVS), 437-463 (WNTI…MQSQ), 469-503 (DGVT…GIQL), 504-534 (DVRL…LTNR), 535-569 (DVSA…GLKP), 570-605 (DGVA…GVSP), and 606-636 (EDVH…MPME). The interval 641 to 716 (IWNSLLAACR…PPGTSSIQIR (76 aa)) is type E motif. The type E(+) motif stretch occupies residues 717–747 (GKTHEFTSGDESHPEMPNIEAMLDEVSQRAS). The segment at 748–842 (HLGHVPDLSN…QGKCSCGDFW (95 aa)) is type DYW motif.

It belongs to the PPR family. PCMP-H subfamily.

This chain is Pentatricopeptide repeat-containing protein At3g22690 (PCMP-H56), found in Arabidopsis thaliana (Mouse-ear cress).